Reading from the N-terminus, the 145-residue chain is UPF0735 ACT domain-containing protein CLH_2637 (145 aa).

The region spanning 69–144 is the ACT domain; it reads TFNLIVKDQT…YVEKIEFVAM (76 aa).

It belongs to the UPF0735 family.

This Clostridium botulinum (strain Alaska E43 / Type E3) protein is UPF0735 ACT domain-containing protein CLH_2637.